The following is a 350-amino-acid chain: GTPase Obg (350 aa).

The Obg domain occupies 1–159; it reads MKFIDEAKIT…WELALELKVL (159 aa). Residues 17–43 are disordered; sequence GDGSASFRREKYIPKGGPDGGDGGRGG. Gly residues predominate over residues 33–43; the sequence is GPDGGDGGRGG. In terms of domain architecture, OBG-type G spans 160–334; the sequence is ADVGLLGMPN…LTYAVMDYLG (175 aa). GTP is bound by residues 166-173, 191-195, 213-216, 284-287, and 315-317; these read GMPNAGKS, FTTLA, DIPG, NKLD, and SAL. Positions 173 and 193 each coordinate Mg(2+).

The protein belongs to the TRAFAC class OBG-HflX-like GTPase superfamily. OBG GTPase family. Monomer. The cofactor is Mg(2+).

It localises to the cytoplasm. An essential GTPase which binds GTP, GDP and possibly (p)ppGpp with moderate affinity, with high nucleotide exchange rates and a fairly low GTP hydrolysis rate. Plays a role in control of the cell cycle, stress response, ribosome biogenesis and in those bacteria that undergo differentiation, in morphogenesis control. The protein is GTPase Obg of Thiobacillus denitrificans (strain ATCC 25259 / T1).